Reading from the N-terminus, the 291-residue chain is 4-hydroxy-tetrahydrodipicolinate synthase (291 aa).

Threonine 45 is a binding site for pyruvate. Catalysis depends on tyrosine 133, which acts as the Proton donor/acceptor. Lysine 161 serves as the catalytic Schiff-base intermediate with substrate. Pyruvate is bound at residue isoleucine 203.

Belongs to the DapA family. In terms of assembly, homotetramer; dimer of dimers.

The protein localises to the cytoplasm. The enzyme catalyses L-aspartate 4-semialdehyde + pyruvate = (2S,4S)-4-hydroxy-2,3,4,5-tetrahydrodipicolinate + H2O + H(+). It functions in the pathway amino-acid biosynthesis; L-lysine biosynthesis via DAP pathway; (S)-tetrahydrodipicolinate from L-aspartate: step 3/4. Functionally, catalyzes the condensation of (S)-aspartate-beta-semialdehyde [(S)-ASA] and pyruvate to 4-hydroxy-tetrahydrodipicolinate (HTPA). This chain is 4-hydroxy-tetrahydrodipicolinate synthase, found in Neisseria meningitidis serogroup C / serotype 2a (strain ATCC 700532 / DSM 15464 / FAM18).